A 542-amino-acid polypeptide reads, in one-letter code: Chaperonin GroEL 1 (542 aa).

Residues 29–32 (TIGP), 86–90 (DGTTT), glycine 414, 479–481 (DAL), and aspartate 495 each bind ATP.

The protein belongs to the chaperonin (HSP60) family. In terms of assembly, forms a cylinder of 14 subunits composed of two heptameric rings stacked back-to-back. Interacts with the co-chaperonin GroES.

It is found in the cytoplasm. It catalyses the reaction ATP + H2O + a folded polypeptide = ADP + phosphate + an unfolded polypeptide.. In terms of biological role, together with its co-chaperonin GroES, plays an essential role in assisting protein folding. The GroEL-GroES system forms a nano-cage that allows encapsulation of the non-native substrate proteins and provides a physical environment optimized to promote and accelerate protein folding. This is Chaperonin GroEL 1 from Synechococcus sp. (strain JA-3-3Ab) (Cyanobacteria bacterium Yellowstone A-Prime).